A 193-amino-acid polypeptide reads, in one-letter code: Adenine phosphoribosyltransferase (193 aa).

Belongs to the purine/pyrimidine phosphoribosyltransferase family. In terms of assembly, homodimer.

Its subcellular location is the cytoplasm. The catalysed reaction is AMP + diphosphate = 5-phospho-alpha-D-ribose 1-diphosphate + adenine. The protein operates within purine metabolism; AMP biosynthesis via salvage pathway; AMP from adenine: step 1/1. In terms of biological role, catalyzes a salvage reaction resulting in the formation of AMP, that is energically less costly than de novo synthesis. This is Adenine phosphoribosyltransferase from Bifidobacterium longum (strain DJO10A).